The chain runs to 88 residues: Prolevitide (88 aa).

An N-terminal signal peptide occupies residues 1-20 (MYKGIFLCVLFAVICANSLA). Glutamine 74 bears the Pyrrolidone carboxylic acid mark. The residue at position 87 (glutamine 87) is a Glutamine amide.

This sequence belongs to the gastrin/cholecystokinin family. As to expression, expressed by the skin glands.

It localises to the secreted. The sequence is that of Prolevitide from Xenopus laevis (African clawed frog).